A 727-amino-acid polypeptide reads, in one-letter code: Rho-related BTB domain-containing protein 2 (727 aa).

The segment at M1 to S210 is rho-like. GTP contacts are provided by residues G21 to T28, D84 to D88, and C140 to D143. 2 BTB domains span residues A266 to E442 and S500 to P567. Residues E304 to H333 are disordered. Residues H315–D324 are compositionally biased toward basic and acidic residues. The interval F703–V727 is disordered. Residues S706–V727 show a composition bias toward low complexity.

Belongs to the small GTPase superfamily. Rho family. Interacts with HSP90AA1 and HSP90AB1. Forms a complex with CUL3 and RBX1. Interacts (via BTB 1 domain) with CUL3. Interacts with MSI2. Post-translationally, autoubiquitinated by RHOBTB2-CUL3-RBX1 ubiquitin ligase complex. As to expression, ubiquitous, with highest levels in neural tissues. Expression is also detected in fetal lung, heart, and brain.

Its function is as follows. Regulator of cell proliferation and apoptosis. It likely functions as a substrate-adapter that recruits key substrates, e.g. MSI2, to CUL3-based ubiquitin ligase complexes for degradation. Required for MSI2 ubiquitination and degradation. The polypeptide is Rho-related BTB domain-containing protein 2 (RHOBTB2) (Homo sapiens (Human)).